Here is a 296-residue protein sequence, read N- to C-terminus: Probable endonuclease 4 (296 aa).

Residues His68, His109, Glu144, Asp178, His181, His213, Asp226, His228, and Glu258 each contribute to the Zn(2+) site.

It belongs to the AP endonuclease 2 family. Zn(2+) is required as a cofactor.

The catalysed reaction is Endonucleolytic cleavage to 5'-phosphooligonucleotide end-products.. Functionally, endonuclease IV plays a role in DNA repair. It cleaves phosphodiester bonds at apurinic or apyrimidinic (AP) sites, generating a 3'-hydroxyl group and a 5'-terminal sugar phosphate. In Staphylococcus epidermidis (strain ATCC 35984 / DSM 28319 / BCRC 17069 / CCUG 31568 / BM 3577 / RP62A), this protein is Probable endonuclease 4.